The following is a 430-amino-acid chain: Bifunctional protein GlmU (430 aa).

Residues 1–223 (MSISVVILAA…EEEFKGVNSK (223 aa)) are pyrophosphorylase. UDP-N-acetyl-alpha-D-glucosamine contacts are provided by residues 8–11 (LAAG), lysine 22, and 81–82 (GT). Aspartate 102 contacts Mg(2+). UDP-N-acetyl-alpha-D-glucosamine is bound by residues glycine 135, glutamate 149, asparagine 164, and asparagine 221. Asparagine 221 is a binding site for Mg(2+). Residues 224–244 (LDLARAEEIMQRRIKEALMMA) form a linker region. The N-acetyltransferase stretch occupies residues 245-430 (GVTMCLPETI…NFFYKFFGDK (186 aa)). The UDP-N-acetyl-alpha-D-glucosamine site is built by arginine 308 and lysine 325. Residue histidine 336 is the Proton acceptor of the active site. UDP-N-acetyl-alpha-D-glucosamine-binding residues include tyrosine 339 and asparagine 350. Acetyl-CoA contacts are provided by residues alanine 353, 359-360 (NY), serine 378, alanine 396, and arginine 413.

In the N-terminal section; belongs to the N-acetylglucosamine-1-phosphate uridyltransferase family. It in the C-terminal section; belongs to the transferase hexapeptide repeat family. In terms of assembly, homotrimer. It depends on Mg(2+) as a cofactor.

Its subcellular location is the cytoplasm. It catalyses the reaction alpha-D-glucosamine 1-phosphate + acetyl-CoA = N-acetyl-alpha-D-glucosamine 1-phosphate + CoA + H(+). It carries out the reaction N-acetyl-alpha-D-glucosamine 1-phosphate + UTP + H(+) = UDP-N-acetyl-alpha-D-glucosamine + diphosphate. The protein operates within nucleotide-sugar biosynthesis; UDP-N-acetyl-alpha-D-glucosamine biosynthesis; N-acetyl-alpha-D-glucosamine 1-phosphate from alpha-D-glucosamine 6-phosphate (route II): step 2/2. Its pathway is nucleotide-sugar biosynthesis; UDP-N-acetyl-alpha-D-glucosamine biosynthesis; UDP-N-acetyl-alpha-D-glucosamine from N-acetyl-alpha-D-glucosamine 1-phosphate: step 1/1. It functions in the pathway bacterial outer membrane biogenesis; LPS lipid A biosynthesis. Catalyzes the last two sequential reactions in the de novo biosynthetic pathway for UDP-N-acetylglucosamine (UDP-GlcNAc). The C-terminal domain catalyzes the transfer of acetyl group from acetyl coenzyme A to glucosamine-1-phosphate (GlcN-1-P) to produce N-acetylglucosamine-1-phosphate (GlcNAc-1-P), which is converted into UDP-GlcNAc by the transfer of uridine 5-monophosphate (from uridine 5-triphosphate), a reaction catalyzed by the N-terminal domain. The polypeptide is Bifunctional protein GlmU (Sulfurovum sp. (strain NBC37-1)).